We begin with the raw amino-acid sequence, 513 residues long: Flagellin A (513 aa).

The protein belongs to the bacterial flagellin family. In terms of assembly, heteromer of FlaA and FlaB. FlaB is located proximal to the hook while the remainder of the filament is composed of the predominant FlaA.

Its subcellular location is the secreted. The protein resides in the bacterial flagellum. Flagellin is the subunit protein which polymerizes to form the filaments of bacterial flagella. Important for motility and virulence. In Helicobacter felis (strain ATCC 49179 / CCUG 28539 / NCTC 12436 / CS1), this protein is Flagellin A (flaA).